A 276-amino-acid chain; its full sequence is Bis(5'-nucleosyl)-tetraphosphatase, symmetrical (276 aa).

This sequence belongs to the Ap4A hydrolase family.

The catalysed reaction is P(1),P(4)-bis(5'-adenosyl) tetraphosphate + H2O = 2 ADP + 2 H(+). Its function is as follows. Hydrolyzes diadenosine 5',5'''-P1,P4-tetraphosphate to yield ADP. This is Bis(5'-nucleosyl)-tetraphosphatase, symmetrical from Mannheimia succiniciproducens (strain KCTC 0769BP / MBEL55E).